A 139-amino-acid chain; its full sequence is Natriuretic peptide Mf-NP (139 aa).

The N-terminal stretch at 1–25 (MVGLSRLTGGGLLLVLALLPLALDG) is a signal peptide. Residues 26 to 75 (KPLEEAPTAPSRIIPFSRPVRKESQAVLDPMVHPERPAGSGDDGDLSRLE) constitute a propeptide that is removed on maturation. Residues Cys86 and Cys102 are joined by a disulfide bond. Residues 117 to 139 (IIPFSRPVRKESRAALDRMQHPG) constitute a propeptide that is removed on maturation.

The protein belongs to the natriuretic peptide family. Expressed by the venom gland.

Its subcellular location is the secreted. Functionally, natriuretic peptide that dose-dependently induces the rapid relaxation of rat aortic strips phenylephrine-precontracted. Acts by stimulating cGMP production in a dose-dependent manner (by probably activating NPR1 and/or NPR2). May also show potent hypotensive effects. The polypeptide is Natriuretic peptide Mf-NP (Micrurus fulvius (Eastern coral snake)).